The following is a 485-amino-acid chain: Glycogen synthase (485 aa).

Lys-15 serves as a coordination point for ADP-alpha-D-glucose.

This sequence belongs to the glycosyltransferase 1 family. Bacterial/plant glycogen synthase subfamily.

The catalysed reaction is [(1-&gt;4)-alpha-D-glucosyl](n) + ADP-alpha-D-glucose = [(1-&gt;4)-alpha-D-glucosyl](n+1) + ADP + H(+). The protein operates within glycan biosynthesis; glycogen biosynthesis. Its function is as follows. Synthesizes alpha-1,4-glucan chains using ADP-glucose. This is Glycogen synthase (glgA) from Geobacillus stearothermophilus (Bacillus stearothermophilus).